A 538-amino-acid polypeptide reads, in one-letter code: Cytochrome c-552 (538 aa).

The N-terminal stretch at 1 to 55 (MKIYLRFVWILIIILNFLLNLFITTNGVIIVNAFKKSLIVAASFASLSLFNSATA) is a signal peptide. His-133 contributes to the heme c binding site. Residues Cys-161, Cys-164, and Lys-165 each coordinate heme. Residues Cys-199, Cys-202, His-203, Cys-264, Cys-267, and His-268 each contribute to the heme c site. Ca(2+) is bound by residues Glu-270, Tyr-271, Lys-316, and Gln-318. Residue Tyr-271 participates in substrate binding. Residue His-319 participates in substrate binding. Heme c is bound by residues His-330, Cys-337, Cys-340, His-341, His-356, Cys-369, Cys-372, His-373, and His-448.

Belongs to the cytochrome c-552 family. Ca(2+) is required as a cofactor. The cofactor is heme c.

The protein localises to the periplasm. The enzyme catalyses 6 Fe(III)-[cytochrome c] + NH4(+) + 2 H2O = 6 Fe(II)-[cytochrome c] + nitrite + 8 H(+). The protein operates within nitrogen metabolism; nitrate reduction (assimilation). Its function is as follows. Catalyzes the reduction of nitrite to ammonia, consuming six electrons in the process. This chain is Cytochrome c-552, found in Haemophilus influenzae (strain 86-028NP).